Here is a 356-residue protein sequence, read N- to C-terminus: UDP-3-O-acylglucosamine N-acyltransferase (356 aa).

The Proton acceptor role is filled by histidine 242.

This sequence belongs to the transferase hexapeptide repeat family. LpxD subfamily. In terms of assembly, homotrimer.

It catalyses the reaction a UDP-3-O-[(3R)-3-hydroxyacyl]-alpha-D-glucosamine + a (3R)-hydroxyacyl-[ACP] = a UDP-2-N,3-O-bis[(3R)-3-hydroxyacyl]-alpha-D-glucosamine + holo-[ACP] + H(+). It functions in the pathway bacterial outer membrane biogenesis; LPS lipid A biosynthesis. Its function is as follows. Catalyzes the N-acylation of UDP-3-O-acylglucosamine using 3-hydroxyacyl-ACP as the acyl donor. Is involved in the biosynthesis of lipid A, a phosphorylated glycolipid that anchors the lipopolysaccharide to the outer membrane of the cell. This chain is UDP-3-O-acylglucosamine N-acyltransferase, found in Acinetobacter baumannii (strain AB307-0294).